The following is a 424-amino-acid chain: Histidine--tRNA ligase (424 aa).

Belongs to the class-II aminoacyl-tRNA synthetase family. As to quaternary structure, homodimer.

The protein resides in the cytoplasm. The catalysed reaction is tRNA(His) + L-histidine + ATP = L-histidyl-tRNA(His) + AMP + diphosphate + H(+). This Desulfitobacterium hafniense (strain DSM 10664 / DCB-2) protein is Histidine--tRNA ligase.